Here is a 635-residue protein sequence, read N- to C-terminus: DNA topoisomerase 4 subunit B (635 aa).

Residues tyrosine 5, asparagine 45, aspartate 72, 113–119 (GLHGVGA), and lysine 340 contribute to the ATP site. In terms of domain architecture, Toprim spans 422–537 (RELFVVEGDS…KGHIYLALPP (116 aa)). Mg(2+)-binding residues include glutamate 428, aspartate 502, and aspartate 504.

The protein belongs to the type II topoisomerase family. ParE type 2 subfamily. Heterotetramer composed of ParC and ParE. Requires Mg(2+) as cofactor. The cofactor is Mn(2+). Ca(2+) serves as cofactor.

The enzyme catalyses ATP-dependent breakage, passage and rejoining of double-stranded DNA.. Topoisomerase IV is essential for chromosome segregation. It relaxes supercoiled DNA. Performs the decatenation events required during the replication of a circular DNA molecule. The chain is DNA topoisomerase 4 subunit B from Mycoplasma pneumoniae (strain ATCC 29342 / M129 / Subtype 1) (Mycoplasmoides pneumoniae).